The sequence spans 285 residues: Bifunctional protein FolD (285 aa).

NADP(+) is bound by residues 166–168, Ser191, and Ile232; that span reads GAS.

Belongs to the tetrahydrofolate dehydrogenase/cyclohydrolase family. Homodimer.

It catalyses the reaction (6R)-5,10-methylene-5,6,7,8-tetrahydrofolate + NADP(+) = (6R)-5,10-methenyltetrahydrofolate + NADPH. It carries out the reaction (6R)-5,10-methenyltetrahydrofolate + H2O = (6R)-10-formyltetrahydrofolate + H(+). Its pathway is one-carbon metabolism; tetrahydrofolate interconversion. Functionally, catalyzes the oxidation of 5,10-methylenetetrahydrofolate to 5,10-methenyltetrahydrofolate and then the hydrolysis of 5,10-methenyltetrahydrofolate to 10-formyltetrahydrofolate. The chain is Bifunctional protein FolD from Edwardsiella ictaluri (strain 93-146).